The chain runs to 597 residues: Arginine--tRNA ligase (597 aa).

The short motif at proline 125 to histidine 135 is the 'HIGH' region element.

This sequence belongs to the class-I aminoacyl-tRNA synthetase family. As to quaternary structure, monomer.

Its subcellular location is the cytoplasm. The enzyme catalyses tRNA(Arg) + L-arginine + ATP = L-arginyl-tRNA(Arg) + AMP + diphosphate. The protein is Arginine--tRNA ligase of Porphyromonas gingivalis (strain ATCC BAA-308 / W83).